The primary structure comprises 183 residues: Ribosome-recycling factor (183 aa).

It belongs to the RRF family.

It localises to the cytoplasm. Its function is as follows. Responsible for the release of ribosomes from messenger RNA at the termination of protein biosynthesis. May increase the efficiency of translation by recycling ribosomes from one round of translation to another. This is Ribosome-recycling factor from Mycoplasma mobile (strain ATCC 43663 / 163K / NCTC 11711) (Mesomycoplasma mobile).